The following is a 264-amino-acid chain: Complement C1q tumor necrosis factor-related protein 6 (264 aa).

The first 24 residues, 1 to 24 (MRVIMGIASLGFLWAVFLLPLVFG), serve as a signal peptide directing secretion. A glycan (N-linked (GlcNAc...) asparagine) is linked at asparagine 77. The interval 81–125 (LKGDKGDRGPTGTPGKPGKNGTRGDRGSQGVKGDKGQAGSPGSSC) is disordered. The region spanning 83-124 (GDKGDRGPTGTPGKPGKNGTRGDRGSQGVKGDKGQAGSPGSS) is the Collagen-like domain. The span at 90–100 (PTGTPGKPGKN) shows a compositional bias: low complexity. In terms of domain architecture, C1q spans 125–264 (CQTHYSAFSV…SGHLIKAEDN (140 aa)).

Its subcellular location is the secreted. The sequence is that of Complement C1q tumor necrosis factor-related protein 6 (C1qtnf6) from Mus musculus (Mouse).